Here is a 215-residue protein sequence, read N- to C-terminus: uncharacterized protein (215 aa).

This is an uncharacterized protein from Escherichia coli (strain K12).